Reading from the N-terminus, the 328-residue chain is L-asparaginase (328 aa).

An Asparaginase/glutaminase domain is found at 1–320; sequence MKLLVLGTGG…EEIRKIMERN (320 aa). Catalysis depends on Thr11, which acts as the Nucleophile; O-isoaspartyl threonine intermediate. L-aspartate is bound by residues Thr11, Asp53, Ser54, Thr85, and Asp86. Residues Thr85, Asp86, Lys156, and Tyr274 each act as charge relay system in the active site.

The protein belongs to the asparaginase 1 family. Homodimer.

The catalysed reaction is L-asparagine + H2O = L-aspartate + NH4(+). Chohan et al. found that divalent metal ions and EDTA do not have any significant effect on enzyme activity, indicating that activity is independent of metal ions. In another study, Hong et al. showed that activity is enhanced by Mg(2+), significantly inhibited by Co(2+) and Ni(2+), and moderately inhibited by Ca(2+), Cu(2+) and EDTA. Unfolding studies suggest that urea cannot induce complete unfolding and inactivation of the enzyme even at a concentration 8 M. However, in the presence of 4 M guanidine hydrochloride, the enzyme structure is unfolded with complete loss of enzyme activity. Catalyzes the hydrolysis of L-asparagine into L-aspartate and ammonia. Also displays D-asparaginase activity, which is about 50% of the L-asparaginase activity. Does not exhibit glutaminase activity. In Thermococcus kodakarensis (strain ATCC BAA-918 / JCM 12380 / KOD1) (Pyrococcus kodakaraensis (strain KOD1)), this protein is L-asparaginase.